Reading from the N-terminus, the 445-residue chain is KIN17-like protein (445 aa).

The segment at 26 to 50 (WYCQLCEKQCRDENGFKCHISSESH) adopts a C2H2-type zinc-finger fold. Low complexity-rich tracts occupy residues 215–229 (NTTT…TTTN) and 239–253 (NDNN…DQTN). Residues 215-256 (NTTTTTTNTTTTTTNKNIFDKLKTNDNNSSNNNYNDQTNPKP) are disordered.

The protein belongs to the KIN17 family.

The polypeptide is KIN17-like protein (Dictyostelium discoideum (Social amoeba)).